Here is a 285-residue protein sequence, read N- to C-terminus: MPSRLSFHKYQGLGNDFILVDNRHQPQPCLTPEEAVALCNRRFGVGADGVIFLLPGQEGADFSMRLFNSDGSEAEMCGNGIRCLARFLQDLGIPGQDGAYQIHTLAGRIVPQVRPDGLVTVDMGIPRLLAGQIPTTLAKPEEKVVRQPLQVGGREWAVTAVSMGNPHCVVFLEEGGSLEELDLERVGPLFEHHPAFPERTNTEFAQVLGPNYLRLRVWERGAGVTLACGTGACAALVAAVLEERAEPQATVELPGGNLEIRWDPDTQHVWMTGPALPVFSGTTAE.

Residues Asn-15 and Asn-68 each coordinate substrate. Cys-77 serves as the catalytic Proton donor. Substrate is bound by residues Gly-78 to Asn-79, Asn-165, Asn-201, and Glu-219 to Arg-220. Cys-228 functions as the Proton acceptor in the catalytic mechanism. Gly-229–Thr-230 contributes to the substrate binding site.

Belongs to the diaminopimelate epimerase family. As to quaternary structure, homodimer.

It localises to the cytoplasm. It catalyses the reaction (2S,6S)-2,6-diaminopimelate = meso-2,6-diaminopimelate. It functions in the pathway amino-acid biosynthesis; L-lysine biosynthesis via DAP pathway; DL-2,6-diaminopimelate from LL-2,6-diaminopimelate: step 1/1. Its function is as follows. Catalyzes the stereoinversion of LL-2,6-diaminopimelate (L,L-DAP) to meso-diaminopimelate (meso-DAP), a precursor of L-lysine and an essential component of the bacterial peptidoglycan. The sequence is that of Diaminopimelate epimerase from Synechococcus sp. (strain JA-3-3Ab) (Cyanobacteria bacterium Yellowstone A-Prime).